Here is a 165-residue protein sequence, read N- to C-terminus: SsrA-binding protein (165 aa).

The interval lysine 141–tyrosine 165 is disordered. Positions aspartate 144 to lysine 159 are enriched in basic and acidic residues.

This sequence belongs to the SmpB family.

It localises to the cytoplasm. Required for rescue of stalled ribosomes mediated by trans-translation. Binds to transfer-messenger RNA (tmRNA), required for stable association of tmRNA with ribosomes. tmRNA and SmpB together mimic tRNA shape, replacing the anticodon stem-loop with SmpB. tmRNA is encoded by the ssrA gene; the 2 termini fold to resemble tRNA(Ala) and it encodes a 'tag peptide', a short internal open reading frame. During trans-translation Ala-aminoacylated tmRNA acts like a tRNA, entering the A-site of stalled ribosomes, displacing the stalled mRNA. The ribosome then switches to translate the ORF on the tmRNA; the nascent peptide is terminated with the 'tag peptide' encoded by the tmRNA and targeted for degradation. The ribosome is freed to recommence translation, which seems to be the essential function of trans-translation. This is SsrA-binding protein from Prochlorococcus marinus (strain SARG / CCMP1375 / SS120).